Consider the following 366-residue polypeptide: Homeobox-leucine zipper protein HOX21 (366 aa).

Disordered stretches follow at residues 25–81 and 94–132; these read QQAA…SSAQ and MLGK…EKKR. Residues 36 to 48 are compositionally biased toward basic residues; the sequence is HHHHHHHGHHGHH. The span at 62–74 shows a compositional bias: pro residues; it reads GPPPPPPPHPHNP. Gly residues predominate over residues 103–115; the sequence is GDGGGGGDEVNGG. A DNA-binding region (homeobox) is located at residues 127–186; it reads AGEKKRRLNVEQVRTLEKNFELGNKLEPERKMQLARALGLQPRQVAIWFQNRRARWKTKQ. Positions 185–229 are leucine-zipper; it reads KQLEKDYDALKRQLDAVKAENDALLNHNKKLQAEIVALKGREAAS. Disordered regions lie at residues 239 to 287 and 312 to 336; these read EASC…GGGG and LHSS…VQAA. Residues 240–252 are compositionally biased toward polar residues; it reads ASCSNRSENSSEI.

Belongs to the HD-ZIP homeobox family. Class I subfamily. In terms of tissue distribution, expressed in seedlings, roots, stems, leaf blades and panicles.

Its subcellular location is the nucleus. Functionally, probable transcription factor. This chain is Homeobox-leucine zipper protein HOX21 (HOX21), found in Oryza sativa subsp. japonica (Rice).